The following is a 613-amino-acid chain: MNMLALTIILPLIGFVLLAFSRGRWSENVSAIVGVGSVGLAALVTAFIGVDFFANGEQTYSQPLWTWMSVGDFNIGFNLVLDGLSLTMLSVVTGVGFLIHMYASWYMRGEEGYSRFFAYTNLFIASMVVLVLADNLLLMYLGWEGVGLCSYLLIGFYYTDPKNGAAAMKAFVVTRVGDVFLAFALFILYNELGTLNFREMVELAPAHFADGNNMLMWATLMLLGGAVGKSAQLPLQTWLADAMAGPTPVSALIHAATMVTAGVYLIARTHGLFLMTPEVLHLVGIVGAVTLLLAGFAALVQTDIKRVLAYSTMSQIGYMFLALGVQAWDAAIFHLMTHAFFKALLFLASGSVILACHHEQNIFKMGGLRKSIPLVYLCFLVGGAALSALPLVTAGFFSKDEILAGAMANGHINLMVAGLVGAFMTSLYTFRMIFIVFHGKEQIHAHAVKGVTHSLPLIVLLILSTFVGALIVPPLQGVLPQTTELAHGSMLTLEITSGVVAVVGILLAAWLWLGKRTLVTSIANSAPGRLLGTWWYNAWGFDWLYDKVFVKPFLGIAWLLKRDPLNSMMNIPAVLSRFAGKGLLLSENGYLRWYVASMSIGAVVVLALLMVLR.

Topologically, residues 1–6 (MNMLAL) are periplasmic. A helical transmembrane segment spans residues 7–23 (TIILPLIGFVLLAFSRG). Residues 24-31 (RWSENVSA) are Cytoplasmic-facing. The chain crosses the membrane as a helical span at residues 32–52 (IVGVGSVGLAALVTAFIGVDF). Topologically, residues 53–74 (FANGEQTYSQPLWTWMSVGDFN) are periplasmic. Residues 75-99 (IGFNLVLDGLSLTMLSVVTGVGFLI) traverse the membrane as a helical segment. The Cytoplasmic segment spans residues 100–115 (HMYASWYMRGEEGYSR). The helical transmembrane segment at 116-133 (FFAYTNLFIASMVVLVLA) threads the bilayer. At 134–210 (DNLLLMYLGW…VELAPAHFAD (77 aa)) the chain is on the periplasmic side. A helical membrane pass occupies residues 211 to 228 (GNNMLMWATLMLLGGAVG). Topologically, residues 229-248 (KSAQLPLQTWLADAMAGPTP) are cytoplasmic. Residues 249 to 267 (VSALIHAATMVTAGVYLIA) traverse the membrane as a helical segment. Residues 268 to 281 (RTHGLFLMTPEVLH) lie on the Periplasmic side of the membrane. Residues 282–300 (LVGIVGAVTLLLAGFAALV) form a helical membrane-spanning segment. Residues 301 to 306 (QTDIKR) lie on the Cytoplasmic side of the membrane. The helical transmembrane segment at 307–325 (VLAYSTMSQIGYMFLALGV) threads the bilayer. Topologically, residues 326-338 (QAWDAAIFHLMTH) are periplasmic. A helical transmembrane segment spans residues 339–356 (AFFKALLFLASGSVILAC). Residues 357-373 (HHEQNIFKMGGLRKSIP) lie on the Cytoplasmic side of the membrane. The chain crosses the membrane as a helical span at residues 374–397 (LVYLCFLVGGAALSALPLVTAGFF). At 398–413 (SKDEILAGAMANGHIN) the chain is on the periplasmic side. Residues 414–437 (LMVAGLVGAFMTSLYTFRMIFIVF) form a helical membrane-spanning segment. Residues 438–454 (HGKEQIHAHAVKGVTHS) lie on the Cytoplasmic side of the membrane. The chain crosses the membrane as a helical span at residues 455-472 (LPLIVLLILSTFVGALIV). The Periplasmic segment spans residues 473–494 (PPLQGVLPQTTELAHGSMLTLE). The helical transmembrane segment at 495-514 (ITSGVVAVVGILLAAWLWLG) threads the bilayer. Topologically, residues 515 to 589 (KRTLVTSIAN…GKGLLLSENG (75 aa)) are cytoplasmic. A helical membrane pass occupies residues 590–607 (YLRWYVASMSIGAVVVLA). The Periplasmic segment spans residues 608-613 (LLMVLR).

It belongs to the complex I subunit 5 family. In terms of assembly, composed of 13 different subunits. Subunits NuoA, H, J, K, L, M, N constitute the membrane sector of the complex.

The protein resides in the cell inner membrane. The catalysed reaction is a quinone + NADH + 5 H(+)(in) = a quinol + NAD(+) + 4 H(+)(out). In terms of biological role, NDH-1 shuttles electrons from NADH, via FMN and iron-sulfur (Fe-S) centers, to quinones in the respiratory chain. The immediate electron acceptor for the enzyme in this species is believed to be ubiquinone. Couples the redox reaction to proton translocation (for every two electrons transferred, four hydrogen ions are translocated across the cytoplasmic membrane), and thus conserves the redox energy in a proton gradient. The sequence is that of NADH-quinone oxidoreductase subunit L (nuoL) from Escherichia coli (strain K12).